Reading from the N-terminus, the 352-residue chain is Phosphoribosylformylglycinamidine cyclo-ligase (352 aa).

The protein belongs to the AIR synthase family.

The protein localises to the cytoplasm. It carries out the reaction 2-formamido-N(1)-(5-O-phospho-beta-D-ribosyl)acetamidine + ATP = 5-amino-1-(5-phospho-beta-D-ribosyl)imidazole + ADP + phosphate + H(+). The protein operates within purine metabolism; IMP biosynthesis via de novo pathway; 5-amino-1-(5-phospho-D-ribosyl)imidazole from N(2)-formyl-N(1)-(5-phospho-D-ribosyl)glycinamide: step 2/2. The polypeptide is Phosphoribosylformylglycinamidine cyclo-ligase (Hahella chejuensis (strain KCTC 2396)).